A 97-amino-acid chain; its full sequence is UPF0147 protein MA_0092 (97 aa).

Belongs to the UPF0147 family.

The protein is UPF0147 protein MA_0092 of Methanosarcina acetivorans (strain ATCC 35395 / DSM 2834 / JCM 12185 / C2A).